The following is a 64-amino-acid chain: MSKECYFTGRKTVSSNNRSHAMNQTKRVVKPNLQKVTILENGELKTVWASAKALKKLPAGVERV.

The disordered stretch occupies residues 1-23; sequence MSKECYFTGRKTVSSNNRSHAMN. Positions 11-23 are enriched in polar residues; it reads KTVSSNNRSHAMN.

The protein belongs to the bacterial ribosomal protein bL28 family.

The chain is Large ribosomal subunit protein bL28 from Lactococcus lactis subsp. cremoris (strain SK11).